Here is a 64-residue protein sequence, read N- to C-terminus: Prokaryotic ubiquitin-like protein Pup (64 aa).

Residues Met-1 to Gly-11 are compositionally biased toward basic and acidic residues. The disordered stretch occupies residues Met-1–Asp-37. The segment at Asp-21–Tyr-58 is ARC ATPase binding. Residues Ala-24 to Glu-52 are a coiled coil. Gln-64 bears the Deamidated glutamine mark. Gln-64 is covalently cross-linked (Isoglutamyl lysine isopeptide (Gln-Lys) (interchain with K-? in acceptor proteins)).

It belongs to the prokaryotic ubiquitin-like protein family. In terms of assembly, strongly interacts with the proteasome-associated ATPase ARC through a hydrophobic interface; the interacting region of Pup lies in its C-terminal half. There is one Pup binding site per ARC hexamer ring. Post-translationally, is modified by deamidation of its C-terminal glutamine to glutamate by the deamidase Dop, a prerequisite to the subsequent pupylation process.

Its pathway is protein degradation; proteasomal Pup-dependent pathway. Its function is as follows. Protein modifier that is covalently attached to lysine residues of substrate proteins, thereby targeting them for proteasomal degradation. The tagging system is termed pupylation. The polypeptide is Prokaryotic ubiquitin-like protein Pup (Rhodococcus jostii (strain RHA1)).